Consider the following 1305-residue polypeptide: DNA-directed RNA polymerase subunit beta' (1305 aa).

4 residues coordinate Zn(2+): C59, C61, C74, and C77. The Mg(2+) site is built by D527, D529, and D531. Zn(2+) contacts are provided by C922, C997, C1004, and C1007.

Belongs to the RNA polymerase beta' chain family. As to quaternary structure, the RNAP catalytic core consists of 2 alpha, 1 beta, 1 beta' and 1 omega subunit. When a sigma factor is associated with the core the holoenzyme is formed, which can initiate transcription. Requires Mg(2+) as cofactor. Zn(2+) serves as cofactor.

The catalysed reaction is RNA(n) + a ribonucleoside 5'-triphosphate = RNA(n+1) + diphosphate. DNA-dependent RNA polymerase catalyzes the transcription of DNA into RNA using the four ribonucleoside triphosphates as substrates. This is DNA-directed RNA polymerase subunit beta' from Ureaplasma parvum serovar 3 (strain ATCC 700970).